The primary structure comprises 505 residues: Transcription factor APG (505 aa).

Disordered stretches follow at residues 1–40, 61–99, 119–156, 169–242, 256–312, 324–344, and 469–505; these read MLRGNDTGSDLAELLWDNGAPAPLRPPPPPPFQPFTCSAA, GAANHHHHDDDDDDDDDVPWLHYHPVVDDDDDADADTAP, PAAAASRVDPDPCSSSHGAVVPSTSAAAAKQARTSGGG, PLQQ…APTT, AQRL…SQDE, RRSAARSSKRSRTAEVHNLSE, and PPPPPPPFPHAAATAVEQTPSPPGAADAGNAPAVKQA. Residues 23 to 33 show a composition bias toward pro residues; it reads PLRPPPPPPFQ. Residues 131-144 are compositionally biased toward polar residues; it reads CSSSHGAVVPSTSA. Low complexity predominate over residues 174 to 199; it reads PSGGETASASASAAATSTVPVESTVV. Over residues 200-212 the composition is skewed to polar residues; that stretch reads QAATNRLRSTPLF. Over residues 222-239 the composition is skewed to pro residues; it reads PPKPSPRAAAPPPPPPLA. A compositionally biased stretch (basic and acidic residues) spans 288–299; it reads GDRRQLNWRDSH. Residues 300-310 show a composition bias toward polar residues; it reads NNQSAEWSASQ. Over residues 324-334 the composition is skewed to basic residues; sequence RRSAARSSKRS. The segment covering 335-344 has biased composition (basic and acidic residues); it reads RTAEVHNLSE. The bHLH domain occupies 335–384; the sequence is RTAEVHNLSERRRRDRINEKMRALQELIPNCNKIDKASMLEEAIEYLKTL. Residues 492 to 505 are compositionally biased toward low complexity; the sequence is GAADAGNAPAVKQA.

The protein belongs to the bHLH protein family. Homodimer and heterodimer with ILI5 or ILI6.

It localises to the nucleus. Atypical bHLH transcription factor that acts as a negative regulator of grain size. Binds the transcription factor ILI6 and forms a heterodimer of antagonistic bHLH transcription factors that regulates grain length and weight by controlling cell elongation in lemma and palea. May be involved in the control of lamina inclination through brassinosteroid signaling pathway. The sequence is that of Transcription factor APG (APG) from Oryza sativa subsp. japonica (Rice).